A 405-amino-acid polypeptide reads, in one-letter code: uncharacterized protein (405 aa).

Transmembrane regions (helical) follow at residues 19–39, 47–67, 85–105, 107–127, 156–176, 178–198, 224–244, 252–272, 283–303, 309–329, 344–364, and 366–386; these read IVSI…PLAV, VMGF…FATL, IVVF…TAGL, ASLP…LGIG, GIVT…FYHW, GLQA…LLAI, GMAL…ITLF, GAAF…LLFP, VAMI…VATM, IGVL…GVVA, TYTV…GLVM, and WAGV…ALLL.

It belongs to the major facilitator superfamily. YhhS family.

The protein localises to the cell inner membrane. This is an uncharacterized protein from Escherichia coli O6:H1 (strain CFT073 / ATCC 700928 / UPEC).